A 316-amino-acid chain; its full sequence is Epoxide hydrolase 3 (316 aa).

The AB hydrolase-1 domain maps to P25–P302. Residue D101 is the Nucleophile of the active site. Y150 is a binding site for an epoxide. The Proton donor role is filled by Y230. The Proton acceptor role is filled by H295.

This sequence belongs to the AB hydrolase superfamily. Epoxide hydrolase family. In terms of assembly, homodimer. In terms of tissue distribution, highly expressed in young fruits 15 days after anthesis (15-DAA).

The enzyme catalyses an epoxide + H2O = an ethanediol. It carries out the reaction (24S)-24,25-epoxycucurbitadienol + H2O = (24R)-24,25-dihydroxycucurbitadienol. It participates in secondary metabolite biosynthesis; terpenoid biosynthesis. Its function is as follows. Epoxide hydrolase involved in the biosynthesis of cucurbitacin and mogroside tetracyclic triterpene natural products (e.g. siamenoside I and mogrosides IV, V and VI). Cucurbitacins have cytotoxic properties and exhibit deterrent taste as a defense barrier against herbivores. Mogrosides are nonsugar highly oxygenated compounds used as high-intensity zero-calorie sweeteners; they also possess pharmacological properties such as regulating immunity, lowering blood sugar and lipid levels, protecting the liver, and acting as antioxidants and antitumor agents. Catalyzes the hydrolysis of aromatic epoxide-containing substrates, such as the conversion of 24,25-epoxycucurbitadienol to 24,25-dihydroxycucurbitadienol. The chain is Epoxide hydrolase 3 from Siraitia grosvenorii (Monk's fruit).